We begin with the raw amino-acid sequence, 147 residues long: Hemoglobin subunit beta (147 aa).

At Val2 the chain carries N-acetylvaline. A Globin domain is found at 3–147; sequence HLTPDEKAAV…VANALAHKYH (145 aa). Thr13 carries the post-translational modification Phosphothreonine. Ser45 is subject to Phosphoserine. Lys60 carries the N6-acetyllysine modification. His64 is a binding site for heme b. Lys83 bears the N6-acetyllysine mark. Position 93 (His93) interacts with heme b. Position 94 is an S-nitrosocysteine (Cys94). An N6-acetyllysine modification is found at Lys145.

Belongs to the globin family. Heterotetramer of two alpha chains and two beta chains. As to expression, red blood cells.

Involved in oxygen transport from the lung to the various peripheral tissues. This is Hemoglobin subunit beta (HBB) from Colobus polykomos (Western black-and-white colobus monkey).